We begin with the raw amino-acid sequence, 287 residues long: Pyridoxal kinase PdxY (287 aa).

Residues S10 and 45–46 (TQ) each bind substrate. Residues D112, A144, E149, K182, and 209 to 212 (RPLV) each bind ATP. D224 provides a ligand contact to substrate.

It belongs to the pyridoxine kinase family. PdxY subfamily. In terms of assembly, homodimer. Requires Mg(2+) as cofactor.

It carries out the reaction pyridoxal + ATP = pyridoxal 5'-phosphate + ADP + H(+). It participates in cofactor metabolism; pyridoxal 5'-phosphate salvage; pyridoxal 5'-phosphate from pyridoxal: step 1/1. In terms of biological role, pyridoxal kinase involved in the salvage pathway of pyridoxal 5'-phosphate (PLP). Catalyzes the phosphorylation of pyridoxal to PLP. In Escherichia coli (strain UTI89 / UPEC), this protein is Pyridoxal kinase PdxY.